The sequence spans 161 residues: Cytidylate kinase (161 aa).

Residue Gly7–Thr15 coordinates ATP.

This sequence belongs to the cytidylate kinase family. Type 2 subfamily.

It is found in the cytoplasm. The enzyme catalyses CMP + ATP = CDP + ADP. The catalysed reaction is dCMP + ATP = dCDP + ADP. This is Cytidylate kinase (cmk) from Methanothermobacter thermautotrophicus (strain ATCC 29096 / DSM 1053 / JCM 10044 / NBRC 100330 / Delta H) (Methanobacterium thermoautotrophicum).